The primary structure comprises 348 residues: Bombesin receptor-activated protein C6orf89 homolog (348 aa).

Residues 1–58 (MDLAANEISIYDKLSETVDLVRQTGHQCGMSEKAIEKFIRQLLEKNEPQRGPPQYPLL) are Cytoplasmic-facing. A helical transmembrane segment spans residues 59-79 (IAVYKVLLTLGLILFTAYFVI). The Extracellular segment spans residues 80-348 (QPFSSLAPEP…ICDGTTLSDL (269 aa)).

Homodimer. Interacts with BRS3. Interacts (via N-terminus) with SIN3B. In terms of processing, glycosylated.

The protein localises to the golgi apparatus membrane. The protein resides in the cytoplasm. Functionally, exhibits histone deacetylase (HDAC) enhancer properties. May play a role in cell cycle progression and wound repair of bronchial epithelial cells. The polypeptide is Bombesin receptor-activated protein C6orf89 homolog (Mus musculus (Mouse)).